The sequence spans 402 residues: Multidrug resistance protein MdtH (402 aa).

At methionine 1–lysine 12 the chain is on the cytoplasmic side. Residues tyrosine 13 to isoleucine 33 traverse the membrane as a helical segment. At serine 34 to glutamate 98 the chain is on the periplasmic side. A helical membrane pass occupies residues proline 99–phenylalanine 116. Topologically, residues aspartate 117 to serine 138 are cytoplasmic. Residues leucine 139–leucine 159 traverse the membrane as a helical segment. The Periplasmic segment spans residues glutamine 160–arginine 164. The chain crosses the membrane as a helical span at residues leucine 165–leucine 185. Over proline 186–tyrosine 213 the chain is Cytoplasmic. Residues valine 214–methionine 234 form a helical membrane-spanning segment. Over valine 235–serine 243 the chain is Periplasmic. Residues alanine 244–alanine 264 form a helical membrane-spanning segment. The Cytoplasmic segment spans residues arginine 265–arginine 276. Residues leucine 277–leucine 297 form a helical membrane-spanning segment. Topologically, residues glutamine 298–glutamine 299 are periplasmic. Residues leucine 300–threonine 320 form a helical membrane-spanning segment. The Cytoplasmic segment spans residues leucine 321–arginine 339. The helical transmembrane segment at leucine 340–glycine 360 threads the bilayer. The Periplasmic portion of the chain corresponds to lysine 361–glutamate 367. A helical membrane pass occupies residues leucine 368–phenylalanine 388. The Cytoplasmic segment spans residues serine 389–alanine 402.

The protein belongs to the major facilitator superfamily. DHA1 family. MdtH (TC 2.A.1.2.21) subfamily.

The protein localises to the cell inner membrane. In terms of biological role, confers resistance to norfloxacin and enoxacin. This is Multidrug resistance protein MdtH from Escherichia coli O157:H7.